Consider the following 593-residue polypeptide: PiggyBac transposable element-derived protein 3 (593 aa).

Disordered stretches follow at residues Ile-27–Leu-53 and Ser-69–Arg-105. The segment covering Ser-38–Gly-47 has biased composition (acidic residues). A Phosphoserine modification is found at Ser-86.

Expressed in heart and oocytes, but not in granulosa cells (at protein level).

The protein resides in the nucleus. Its function is as follows. Binds in vitro to PGBD3-related transposable elements, called MER85s; these non-autonomous 140 bp elements are characterized by the presence of PGBD3 terminal inverted repeats and the absence of internal transposase ORF. This chain is PiggyBac transposable element-derived protein 3 (PGBD3), found in Homo sapiens (Human).